Consider the following 391-residue polypeptide: Probable acridone synthase 4 (391 aa).

C164 is a catalytic residue.

The protein belongs to the thiolase-like superfamily. Chalcone/stilbene synthases family.

It carries out the reaction N-methylanthraniloyl-CoA + 3 malonyl-CoA + 3 H(+) = 1,3-dihydroxy-N-methylacridone + 3 CO2 + 4 CoA + H2O. The polypeptide is Probable acridone synthase 4 (ACS4) (Ruta graveolens (Common rue)).